A 72-amino-acid chain; its full sequence is Large ribosomal subunit protein bL31c (72 aa).

The protein belongs to the bacterial ribosomal protein bL31 family. Type A subfamily. Part of the 50S ribosomal subunit.

It is found in the plastid. The protein localises to the chloroplast. Its function is as follows. Binds the 23S rRNA. In Phaeodactylum tricornutum (strain CCAP 1055/1), this protein is Large ribosomal subunit protein bL31c (rpl31).